Consider the following 409-residue polypeptide: uncharacterized protein (409 aa).

4 helical membrane-spanning segments follow: residues 20–40, 283–303, 344–364, and 372–392; these read ILTM…VSML, FALL…IGVM, IGGI…TVIF, and IPAV…FGLL.

Belongs to the ABC-4 integral membrane protein family.

Its subcellular location is the cell membrane. This is an uncharacterized protein from Bacillus subtilis (strain 168).